We begin with the raw amino-acid sequence, 39 residues long: Potassium channel toxin alpha-KTx 2.16 (39 aa).

3 cysteine pairs are disulfide-bonded: Cys-7–Cys-29, Cys-13–Cys-34, and Cys-17–Cys-36. An Isoleucine amide modification is found at Ile-39.

It belongs to the short scorpion toxin superfamily. Potassium channel inhibitor family. Alpha-KTx 02 subfamily. As to expression, expressed by the venom gland.

It localises to the secreted. Functionally, blocks human voltage-gated potassium channels Kv1.2/KCNA2 (IC(50)=0.7 nM), Kv1.3/KCNA3 (IC(50)=26.2 nM) and blocks intermediate conductance calcium-activated potassium channel KCa3.1/KCNN4 (IC(50)=56 nM). The sequence is that of Potassium channel toxin alpha-KTx 2.16 from Centruroides tecomanus (Scorpion).